Consider the following 307-residue polypeptide: Ribosomal RNA small subunit methyltransferase H (307 aa).

Residues 33–35, Asp52, Leu83, Asp97, and Gln104 contribute to the S-adenosyl-L-methionine site; that span reads GGH.

Belongs to the methyltransferase superfamily. RsmH family.

The protein resides in the cytoplasm. The enzyme catalyses cytidine(1402) in 16S rRNA + S-adenosyl-L-methionine = N(4)-methylcytidine(1402) in 16S rRNA + S-adenosyl-L-homocysteine + H(+). In terms of biological role, specifically methylates the N4 position of cytidine in position 1402 (C1402) of 16S rRNA. The polypeptide is Ribosomal RNA small subunit methyltransferase H (Campylobacter fetus subsp. fetus (strain 82-40)).